The following is a 430-amino-acid chain: Enolase (430 aa).

Gln163 contributes to the (2R)-2-phosphoglycerate binding site. Catalysis depends on Glu205, which acts as the Proton donor. The Mg(2+) site is built by Asp242, Glu287, and Asp314. Positions 339, 368, 369, and 390 each coordinate (2R)-2-phosphoglycerate. The active-site Proton acceptor is the Lys339.

The protein belongs to the enolase family. Mg(2+) is required as a cofactor.

It is found in the cytoplasm. The protein localises to the secreted. It localises to the cell surface. It catalyses the reaction (2R)-2-phosphoglycerate = phosphoenolpyruvate + H2O. It participates in carbohydrate degradation; glycolysis; pyruvate from D-glyceraldehyde 3-phosphate: step 4/5. Functionally, catalyzes the reversible conversion of 2-phosphoglycerate (2-PG) into phosphoenolpyruvate (PEP). It is essential for the degradation of carbohydrates via glycolysis. The polypeptide is Enolase (Exiguobacterium sibiricum (strain DSM 17290 / CCUG 55495 / CIP 109462 / JCM 13490 / 255-15)).